Here is a 357-residue protein sequence, read N- to C-terminus: Neurogenic differentiation factor 1 (357 aa).

Residues 1-94 (MTKSYSESGL…GPKKKKMTKA (94 aa)) are disordered. A compositionally biased stretch (acidic residues) spans 58–78 (EEEEEDEDLEEEEEEEEEEED). Residues 81–93 (PKRRGPKKKKMTK) are compositionally biased toward basic residues. Residues 87 to 93 (KKKKMTK) carry the Nuclear localization signal motif. The bHLH domain maps to 101–153 (LRRMKANARERNRMHGLNAALDNLRKVVPCYSKTQKLSKIETLRLAKNYIWAL). Phosphoserine is present on residues S162, S259, S266, and S274. Phosphoserine; by CaMK2 is present on S336.

Efficient DNA-binding requires dimerization with another bHLH protein. Heterodimer with TCF3/E47; the heterodimer is inhibited in presence of ID2, but not NR0B2, to E-box element. Interacts with EP300; the interaction is inhibited by NR0B2. Interacts with RREB1. Interacts with ATOH8. In islet cells, phosphorylated on Ser-274 upon glucose stimulation; which may be required for nuclear localization. In activated neurons, phosphorylated on Ser-336; which promotes dendritic growth. Phosphorylated by MAPK1; phosphorylation regulates heterodimerization and DNA-binding activities. Phosphorylation on Ser-266 and Ser-274 increases transactivation on the insulin promoter in glucose-stimulated insulinoma cells. In terms of tissue distribution, expressed in pancreatic beta cells, pulmonary neuroendocrine cells and retinal interneurons amacrine cells (at protein level). Expressed in endocrine cells of the pancreas. Expressed in the inner layer of cerebellar external granular layer (EGL). Expressed in the Ammon's horn (AH), which includes the CA1-CA3 pyramidal layer and in granule cells of the dentate gyrus (DG). Expressed in photoreceptors of the outer nuclear layer (ONL), in a subset of cells in the lower half of the inner nuclear layer (INL), and in a subset of cells in the ganglion cell layer (GCL) of the retina. Expressed in cholinergic and AII amacrine cell types. Expressed in differentiating neurons of both the central and peripheral nervous systems.

It is found in the cytoplasm. The protein resides in the nucleus. Its function is as follows. Acts as a transcriptional activator: mediates transcriptional activation by binding to E box-containing promoter consensus core sequences 5'-CANNTG-3'. Associates with the p300/CBP transcription coactivator complex to stimulate transcription of the secretin gene as well as the gene encoding the cyclin-dependent kinase inhibitor CDKN1A. Contributes to the regulation of several cell differentiation pathways, like those that promote the formation of early retinal ganglion cells, inner ear sensory neurons, granule cells forming either the cerebellum or the dentate gyrus cell layer of the hippocampus, endocrine islet cells of the pancreas and enteroendocrine cells of the small intestine. Together with PAX6 or SIX3, is required for the regulation of amacrine cell fate specification. Also required for dendrite morphogenesis and maintenance in the cerebellar cortex. Associates with chromatin to enhancer regulatory elements in genes encoding key transcriptional regulators of neurogenesis. The polypeptide is Neurogenic differentiation factor 1 (Neurod1) (Mus musculus (Mouse)).